A 564-amino-acid polypeptide reads, in one-letter code: Proline--tRNA ligase (564 aa).

Belongs to the class-II aminoacyl-tRNA synthetase family. ProS type 1 subfamily. In terms of assembly, homodimer.

The protein localises to the cytoplasm. It catalyses the reaction tRNA(Pro) + L-proline + ATP = L-prolyl-tRNA(Pro) + AMP + diphosphate. In terms of biological role, catalyzes the attachment of proline to tRNA(Pro) in a two-step reaction: proline is first activated by ATP to form Pro-AMP and then transferred to the acceptor end of tRNA(Pro). As ProRS can inadvertently accommodate and process non-cognate amino acids such as alanine and cysteine, to avoid such errors it has two additional distinct editing activities against alanine. One activity is designated as 'pretransfer' editing and involves the tRNA(Pro)-independent hydrolysis of activated Ala-AMP. The other activity is designated 'posttransfer' editing and involves deacylation of mischarged Ala-tRNA(Pro). The misacylated Cys-tRNA(Pro) is not edited by ProRS. The sequence is that of Proline--tRNA ligase from Bacillus subtilis (strain 168).